A 188-amino-acid chain; its full sequence is RxLR effector protein Avh241 (188 aa).

Residues 1–16 (MRQYCLLLIVLALAAA) form the signal peptide. A RxLR-dEER motif is present at residues 43–58 (RLLRSEPQDEDTFEDR). Residues 73 to 78 (GAAKAK) carry the Host plasma membrane localization motif motif.

This sequence belongs to the RxLR effector family.

The protein localises to the secreted. It localises to the host cell membrane. Functionally, effector that triggers cell death in a variety of plant species (including tobacco, tomato and soybean), regardless of the Rps genes present. Avh241 interacts with the plant immune system via at least two different mechanisms, one recognized by plants dependent on subcellular localization and one promoting infection independent on membrane localization. The cell death triggered by Avh241 in N.benthamiana requires the two host mitogen-activated protein kinases, MEK2 and WIPK. The chain is RxLR effector protein Avh241 from Phytophthora sojae (strain P6497) (Soybean stem and root rot agent).